Consider the following 69-residue polypeptide: Large ribosomal subunit protein uL29 (69 aa).

This sequence belongs to the universal ribosomal protein uL29 family.

This chain is Large ribosomal subunit protein uL29, found in Rhodopseudomonas palustris (strain TIE-1).